A 309-amino-acid polypeptide reads, in one-letter code: Olfactory receptor-like protein OLF4 (309 aa).

Topologically, residues 1-25 are extracellular; sequence MELENDTRIPEFLLLGFSEEPKLQP. Asn5 is a glycosylation site (N-linked (GlcNAc...) asparagine). The chain crosses the membrane as a helical span at residues 26-49; the sequence is FLFGLFLSMYLVTILGNLLLILAV. The Cytoplasmic portion of the chain corresponds to 50–57; it reads SSDSHLHT. The helical transmembrane segment at 58–79 threads the bilayer; it reads PMYFFLANLSFVDICFTCTTIP. At 80–100 the chain is on the extracellular side; sequence KMLVNIQTQRKVITYESCIIQ. The chain crosses the membrane as a helical span at residues 101 to 120; the sequence is MYFFELFAGIDNFLLTVMAY. Residues 121 to 139 lie on the Cytoplasmic side of the membrane; sequence DRYMAICYPLHYMVIMNPQ. A helical membrane pass occupies residues 140–158; it reads LCSLLLLVSWIMSALHSLL. The Extracellular portion of the chain corresponds to 159–196; the sequence is QTLMVLRLSFCTHFQIPHFFCELNQMIQLACSDTFLNN. The chain crosses the membrane as a helical span at residues 197-219; it reads MMLYFAAILLGVAPLVGVLYSYF. The Cytoplasmic portion of the chain corresponds to 220–236; sequence KIVSSIRGISSAHSKYK. A helical membrane pass occupies residues 237–260; sequence AFSTCASHLSVVSLFYCTSLGVYL. Over 261–272 the chain is Extracellular; that stretch reads SSAAPQSTHTSS. Residues 273–292 traverse the membrane as a helical segment; the sequence is VASVMYTVVTPMLNPFIYSL. The Cytoplasmic portion of the chain corresponds to 293–309; it reads RNKDIKGALNVFFRGKP.

It belongs to the G-protein coupled receptor 1 family.

The protein localises to the cell membrane. Its function is as follows. Putative odorant or sperm cell receptor. This Canis lupus familiaris (Dog) protein is Olfactory receptor-like protein OLF4.